Reading from the N-terminus, the 269-residue chain is 4-hydroxy-tetrahydrodipicolinate reductase (269 aa).

NAD(+) is bound at residue 9–14 (GVAGRM). Arginine 36 provides a ligand contact to NADP(+). Residues 99-101 (GTT) and 123-126 (APNM) each bind NAD(+). Residue histidine 156 is the Proton donor/acceptor of the active site. A (S)-2,3,4,5-tetrahydrodipicolinate-binding site is contributed by histidine 157. Residue lysine 160 is the Proton donor of the active site. 166 to 167 (GT) provides a ligand contact to (S)-2,3,4,5-tetrahydrodipicolinate.

Belongs to the DapB family.

It localises to the cytoplasm. It catalyses the reaction (S)-2,3,4,5-tetrahydrodipicolinate + NAD(+) + H2O = (2S,4S)-4-hydroxy-2,3,4,5-tetrahydrodipicolinate + NADH + H(+). It carries out the reaction (S)-2,3,4,5-tetrahydrodipicolinate + NADP(+) + H2O = (2S,4S)-4-hydroxy-2,3,4,5-tetrahydrodipicolinate + NADPH + H(+). Its pathway is amino-acid biosynthesis; L-lysine biosynthesis via DAP pathway; (S)-tetrahydrodipicolinate from L-aspartate: step 4/4. Its function is as follows. Catalyzes the conversion of 4-hydroxy-tetrahydrodipicolinate (HTPA) to tetrahydrodipicolinate. In Methylococcus capsulatus (strain ATCC 33009 / NCIMB 11132 / Bath), this protein is 4-hydroxy-tetrahydrodipicolinate reductase.